A 116-amino-acid polypeptide reads, in one-letter code: MRVKTGVVRRRRHKKVLKLARGFYSGRRKHFRKAKEQLERSMYYAFRDRKQKKREFRSLWVVRINAACRMHNTSYSRFMHALKVANIELDRKVLADMAMNDMQAFTSVLESVKEHL.

The protein belongs to the bacterial ribosomal protein bL20 family.

In terms of biological role, binds directly to 23S ribosomal RNA and is necessary for the in vitro assembly process of the 50S ribosomal subunit. It is not involved in the protein synthesizing functions of that subunit. This Helicobacter pylori (strain ATCC 700392 / 26695) (Campylobacter pylori) protein is Large ribosomal subunit protein bL20 (rplT).